We begin with the raw amino-acid sequence, 262 residues long: Ribosomal RNA small subunit methyltransferase A (262 aa).

S-adenosyl-L-methionine is bound by residues Asn-14, Leu-16, Gly-41, Glu-62, Asp-87, and Asn-109.

The protein belongs to the class I-like SAM-binding methyltransferase superfamily. rRNA adenine N(6)-methyltransferase family. RsmA subfamily.

The protein resides in the cytoplasm. The enzyme catalyses adenosine(1518)/adenosine(1519) in 16S rRNA + 4 S-adenosyl-L-methionine = N(6)-dimethyladenosine(1518)/N(6)-dimethyladenosine(1519) in 16S rRNA + 4 S-adenosyl-L-homocysteine + 4 H(+). Specifically dimethylates two adjacent adenosines (A1518 and A1519) in the loop of a conserved hairpin near the 3'-end of 16S rRNA in the 30S particle. May play a critical role in biogenesis of 30S subunits. This is Ribosomal RNA small subunit methyltransferase A from Francisella tularensis subsp. holarctica (strain FTNF002-00 / FTA).